We begin with the raw amino-acid sequence, 163 residues long: Endoribonuclease YbeY (163 aa).

Residues H121, H125, and H131 each contribute to the Zn(2+) site.

Belongs to the endoribonuclease YbeY family. It depends on Zn(2+) as a cofactor.

It localises to the cytoplasm. Its function is as follows. Single strand-specific metallo-endoribonuclease involved in late-stage 70S ribosome quality control and in maturation of the 3' terminus of the 16S rRNA. The polypeptide is Endoribonuclease YbeY (Synechococcus sp. (strain JA-2-3B'a(2-13)) (Cyanobacteria bacterium Yellowstone B-Prime)).